The sequence spans 267 residues: Nanos homolog 1 (267 aa).

The tract at residues 40-56 (FSSWNDYLGLATLITRA) is essential for its translational repressor activity. The disordered stretch occupies residues 57 to 94 (SDRGSPHEGPGPTAAGPTMGPPEDDEDDDGEEPEAGGR). The span at 78-90 (PEDDEDDDGEEPE) shows a compositional bias: acidic residues. A Nanos-type zinc finger spans residues 188 to 242 (VCVFCRNNKEAVALYTTHILKGPDGRVLCPVLRRYTCPLCGASGDNAHTIKYCPL). Residues C189, C192, H205, C216, C224, C227, H235, and C240 each contribute to the Zn(2+) site. 2 short sequence motifs (C2HC) span residues 189–216 (CVFC…RVLC) and 224–240 (CPLC…IKYC). The tract at residues 243–267 (SKVPPPTVRPPPRSNRDSLPSKKLR) is disordered. The span at 244 to 255 (KVPPPTVRPPPR) shows a compositional bias: pro residues. The span at 256–267 (SNRDSLPSKKLR) shows a compositional bias: basic and acidic residues.

Belongs to the nanos family. As to quaternary structure, interacts with PUM2, SNAPIN and CTNNB1. Interacts (via N-terminal region) with CTNND1. Interacts with DDX20 (via N-terminal region). In terms of tissue distribution, expressed in the oocyte. Transiently expressed in eight-cell embryos. At 12.5 dpc, it is re-expressed in the central nervous system and the expression continues in the adult brain, in which the hippocampal formation is the predominant region. Expressed in the seminiferous tubules of mature testis, but not in the primordial germ cells.

Its subcellular location is the cytoplasm. It is found in the perinuclear region. In terms of biological role, may act as a translational repressor which regulates translation of specific mRNAs by forming a complex with PUM2 that associates with the 3'-UTR of mRNA targets. Capable of interfering with the proadhesive and anti-invasive functions of E-cadherin. Up-regulates the production of MMP14 to promote tumor cell invasion. Not essential for normal development. The polypeptide is Nanos homolog 1 (Nanos1) (Mus musculus (Mouse)).